The following is a 1004-amino-acid chain: 2-oxoglutarate dehydrogenase E1 component (1004 aa).

This sequence belongs to the alpha-ketoglutarate dehydrogenase family. In terms of assembly, homodimer. Part of the 2-oxoglutarate dehydrogenase (OGDH) complex composed of E1 (2-oxoglutarate dehydrogenase), E2 (dihydrolipoamide succinyltransferase) and E3 (dihydrolipoamide dehydrogenase); the complex contains multiple copies of the three enzymatic components (E1, E2 and E3). It depends on thiamine diphosphate as a cofactor.

The catalysed reaction is N(6)-[(R)-lipoyl]-L-lysyl-[protein] + 2-oxoglutarate + H(+) = N(6)-[(R)-S(8)-succinyldihydrolipoyl]-L-lysyl-[protein] + CO2. Its function is as follows. E1 component of the 2-oxoglutarate dehydrogenase (OGDH) complex which catalyzes the decarboxylation of 2-oxoglutarate, the first step in the conversion of 2-oxoglutarate to succinyl-CoA and CO(2). The chain is 2-oxoglutarate dehydrogenase E1 component from Brucella melitensis biotype 2 (strain ATCC 23457).